The sequence spans 309 residues: UPF0252 protein PH0672 (309 aa).

2 helical membrane passes run 5 to 25 (SVIIFIVIMLGIGCLNLNESI) and 106 to 126 (AVLTAGLLLASNISPVYLMIF).

Belongs to the UPF0252 family.

The protein resides in the cell membrane. The protein is UPF0252 protein PH0672 of Pyrococcus horikoshii (strain ATCC 700860 / DSM 12428 / JCM 9974 / NBRC 100139 / OT-3).